Reading from the N-terminus, the 492-residue chain is Serine/threonine-protein kinase 3 (492 aa).

Positions 26–277 (FDVLEKLGEG…ATQLLQHPFI (252 aa)) constitute a Protein kinase domain. ATP is bound by residues 32-40 (LGEGSYGSV) and Lys-55. Catalysis depends on Asp-145, which acts as the Proton acceptor. Phosphothreonine; by autocatalysis is present on Thr-179. 2 coiled-coil regions span residues 286–328 (LRDL…TMVK) and 443–476 (NLDF…AKRQ). The segment covering 297-307 (KAKRQQEQQRE) has biased composition (basic and acidic residues). The segment at 297–339 (KAKRQQEQQRELEEDDENSEEEVEVDSHTMVKSGSESAGTMRA) is disordered. The segment covering 308 to 320 (LEEDDENSEEEVE) has biased composition (acidic residues). The segment covering 326-339 (MVKSGSESAGTMRA) has biased composition (polar residues). The SARAH domain maps to 438–485 (FDFLKNLDFEELQMRLTALDPMMEREIEELRQRYTAKRQPILDAMDAK).

Belongs to the protein kinase superfamily. STE Ser/Thr protein kinase family. STE20 subfamily. As to quaternary structure, homodimer; mediated via the coiled-coil region. Mg(2+) serves as cofactor.

It localises to the cytoplasm. Its subcellular location is the nucleus. It catalyses the reaction L-seryl-[protein] + ATP = O-phospho-L-seryl-[protein] + ADP + H(+). The enzyme catalyses L-threonyl-[protein] + ATP = O-phospho-L-threonyl-[protein] + ADP + H(+). With respect to regulation, inhibited by the C-terminal non-catalytic region. Activated by caspase-cleavage. Full activation also requires homodimerization and autophosphorylation of Thr-179. Its function is as follows. Stress-activated, pro-apoptotic kinase which, following caspase-cleavage, enters the nucleus and induces chromatin condensation followed by internucleosomal DNA fragmentation. Key component of the Hippo signaling pathway which plays a pivotal role in organ size control and tumor suppression by restricting proliferation and promoting apoptosis. The core of this pathway is composed of a kinase cascade wherein stk3/mst2 and stk4/mst1, in complex with its regulatory protein sav1, phosphorylates and activates lats1/2 in complex with its regulatory protein mob1, which in turn phosphorylates and inactivates yap1 oncoprotein and wwtr1/taz. Phosphorylation of yap1 by lats2 inhibits its translocation into the nucleus to regulate cellular genes important for cell proliferation, cell death, and cell migration. The polypeptide is Serine/threonine-protein kinase 3 (stk3) (Danio rerio (Zebrafish)).